We begin with the raw amino-acid sequence, 194 residues long: Imidazoleglycerol-phosphate dehydratase (194 aa).

The protein belongs to the imidazoleglycerol-phosphate dehydratase family.

The protein resides in the cytoplasm. The enzyme catalyses D-erythro-1-(imidazol-4-yl)glycerol 3-phosphate = 3-(imidazol-4-yl)-2-oxopropyl phosphate + H2O. The protein operates within amino-acid biosynthesis; L-histidine biosynthesis; L-histidine from 5-phospho-alpha-D-ribose 1-diphosphate: step 6/9. The chain is Imidazoleglycerol-phosphate dehydratase from Bacillus cereus (strain AH820).